The chain runs to 455 residues: Folate transporter 2 (455 aa).

The next 8 membrane-spanning stretches (helical) occupy residues 42–64, 84–103, 110–131, 137–157, 177–195, 201–221, 242–261, and 281–301; these read IVVYLVGLSDGLTHLASLAIYYL, YIPFILKPVIALITDSFSIF, YLFLFSLFQSLNFLALAFLNLS, LILFFISLCASFCTTVAEALV, IASKAIGSLSVAYFSGYFL, EYIFIATSIFPLIISLSCLFL, FINTPIFLGPFLYIFVYMSG, and SFMGTLRLTYGIASLIGIIIY. Asn307 carries N-linked (GlcNAc...) asparagine glycosylation. A run of 2 helical transmembrane segments spans residues 313–331 and 347–367; these read TLIITTLVSFPIYISPIIL and VLSGGFLIEAITEIQLLPLFI. The N-linked (GlcNAc...) asparagine glycan is linked to Asn416. A helical transmembrane segment spans residues 417 to 438; it reads LSLYILTCGFFLLFSLTLVPLL.

The protein belongs to the major facilitator superfamily. Folate-biopterin transporter (TC 2.A.71) family.

The protein localises to the cell membrane. The enzyme catalyses folate(in) + H(+)(in) = folate(out) + H(+)(out). It catalyses the reaction (6S)-5-methyl-5,6,7,8-tetrahydrofolate(in) + H(+)(in) = (6S)-5-methyl-5,6,7,8-tetrahydrofolate(out) + H(+)(out). Its activity is regulated as follows. Transport of folates is inhibited by probenecid and methotrexate. Folate transporter with broad substrate specificity. Transports folic acid, folinic acid, pteroic acid, dihydropteroic acid, the folate precursor p-amino benzoic acid (pABA) and the human folate catabolite pABA monoglutamate. Can transport 5-methyltetrahydrofolate with low efficiency. The polypeptide is Folate transporter 2 (Plasmodium falciparum (isolate 3D7)).